We begin with the raw amino-acid sequence, 256 residues long: Type III pantothenate kinase (256 aa).

6-13 is a binding site for ATP; it reads DVGNTNIV. Residue 107-110 coordinates substrate; it reads GADR. D109 acts as the Proton acceptor in catalysis. Position 129 (D129) interacts with K(+). ATP is bound at residue T132. Residue T184 coordinates substrate.

This sequence belongs to the type III pantothenate kinase family. Homodimer. It depends on NH4(+) as a cofactor. The cofactor is K(+).

The protein localises to the cytoplasm. The enzyme catalyses (R)-pantothenate + ATP = (R)-4'-phosphopantothenate + ADP + H(+). The protein operates within cofactor biosynthesis; coenzyme A biosynthesis; CoA from (R)-pantothenate: step 1/5. In terms of biological role, catalyzes the phosphorylation of pantothenate (Pan), the first step in CoA biosynthesis. The protein is Type III pantothenate kinase of Pelotomaculum thermopropionicum (strain DSM 13744 / JCM 10971 / SI).